A 323-amino-acid polypeptide reads, in one-letter code: RNA polymerase II holoenzyme cyclin-like subunit (323 aa).

Residues 45–176 (DSKQNGIEQS…LLEELESYLI (132 aa)) form the Cyclin N-terminal domain.

Belongs to the cyclin family. Cyclin C subfamily. In terms of assembly, component of the SRB8-11 complex which consists of SRB8, SSN2/SRB9, SSN3/SRB10 and SSN8/SRB11. The SRB8-11 complex associates with the Mediator complex. The SSN3/SRB10 and SSN8/SRB11 kinase-cyclin pair also associate with the RNA polymerase II holoenzyme. Interacts with ASK10.

The protein resides in the nucleus. Its function is as follows. Component of the SRB8-11 complex. The SRB8-11 complex is a regulatory module of the Mediator complex which is itself involved in regulation of basal and activated RNA polymerase II-dependent transcription. The SRB8-11 complex may be involved in the transcriptional repression of a subset of genes regulated by Mediator. It may inhibit the association of the Mediator complex with RNA polymerase II to form the holoenzyme complex. The SRB8-11 complex phosphorylates the C-terminal domain (CTD) of the largest subunit of RNA polymerase II RPB1 at serines 2 and 5. The SSN3/SRB10 and SSN8/SRB11 kinase-cyclin pair may also positively and negatively regulate numerous transcriptional activators in response to changes in nutritional and physiological conditions. The sequence is that of RNA polymerase II holoenzyme cyclin-like subunit (SSN8) from Saccharomyces cerevisiae (strain ATCC 204508 / S288c) (Baker's yeast).